The sequence spans 348 residues: Holliday junction branch migration complex subunit RuvB (348 aa).

Residues 1-184 (MTLNRDMVSP…FGIVQRLEFY (184 aa)) are large ATPase domain (RuvB-L). Residues Leu-23, Arg-24, Gly-65, Lys-68, Thr-69, Thr-70, Arg-174, Tyr-184, and Arg-221 each contribute to the ATP site. Thr-69 serves as a coordination point for Mg(2+). Positions 185–255 (AVDHLVLIVE…VAQKALDLLD (71 aa)) are small ATPAse domain (RuvB-S). The interval 258 to 348 (SHGFDTMDRK…QEVSDLFPNE (91 aa)) is head domain (RuvB-H). Residues Arg-294, Arg-313, and Arg-318 each coordinate DNA.

The protein belongs to the RuvB family. In terms of assembly, homohexamer. Forms an RuvA(8)-RuvB(12)-Holliday junction (HJ) complex. HJ DNA is sandwiched between 2 RuvA tetramers; dsDNA enters through RuvA and exits via RuvB. An RuvB hexamer assembles on each DNA strand where it exits the tetramer. Each RuvB hexamer is contacted by two RuvA subunits (via domain III) on 2 adjacent RuvB subunits; this complex drives branch migration. In the full resolvosome a probable DNA-RuvA(4)-RuvB(12)-RuvC(2) complex forms which resolves the HJ.

The protein localises to the cytoplasm. The enzyme catalyses ATP + H2O = ADP + phosphate + H(+). In terms of biological role, the RuvA-RuvB-RuvC complex processes Holliday junction (HJ) DNA during genetic recombination and DNA repair, while the RuvA-RuvB complex plays an important role in the rescue of blocked DNA replication forks via replication fork reversal (RFR). RuvA specifically binds to HJ cruciform DNA, conferring on it an open structure. The RuvB hexamer acts as an ATP-dependent pump, pulling dsDNA into and through the RuvAB complex. RuvB forms 2 homohexamers on either side of HJ DNA bound by 1 or 2 RuvA tetramers; 4 subunits per hexamer contact DNA at a time. Coordinated motions by a converter formed by DNA-disengaged RuvB subunits stimulates ATP hydrolysis and nucleotide exchange. Immobilization of the converter enables RuvB to convert the ATP-contained energy into a lever motion, pulling 2 nucleotides of DNA out of the RuvA tetramer per ATP hydrolyzed, thus driving DNA branch migration. The RuvB motors rotate together with the DNA substrate, which together with the progressing nucleotide cycle form the mechanistic basis for DNA recombination by continuous HJ branch migration. Branch migration allows RuvC to scan DNA until it finds its consensus sequence, where it cleaves and resolves cruciform DNA. The chain is Holliday junction branch migration complex subunit RuvB from Nitrosococcus oceani (strain ATCC 19707 / BCRC 17464 / JCM 30415 / NCIMB 11848 / C-107).